We begin with the raw amino-acid sequence, 376 residues long: Multicilin (376 aa).

Residues 165-213 (EQYWRDVADHNQKALGDALVENNQLQVSLTEKQEEIASLKEKNIQLNEL) adopt a coiled-coil conformation. The tract at residues 230–261 (ERPKHSSGATQGRLPVKRSLEDFYPQSNEPDS) is disordered. The segment at 331-376 (TELEEDVSFRTSIKEHSTIRTLAFPQGNAFTIRTAAGGYKFRWVPN) is TIRT domain.

Belongs to the geminin family. In terms of assembly, component of the EDM complex, at least composed of e2f4, e2f5, mcidas and tfdp1.

It localises to the nucleus. Functionally, transcription regulator specifically required for multiciliate cell differentiation. Acts in a multiprotein complex containing e2f4 and e2f5 that binds and activate genes required for centriole biogenesis. Activates genes required for centriole assembly (plk4, cep152) and genes specifically required for motile cilia formation (foxj1). Also promotes the deuterosome pathway of centriole biogenesis by activating expression of deup1, but not its paralog cep63. The chain is Multicilin (mcidas) from Xenopus tropicalis (Western clawed frog).